A 262-amino-acid polypeptide reads, in one-letter code: Type III pantothenate kinase (262 aa).

6–13 lines the ATP pocket; it reads DVGNTNTV. Residues Tyr101 and 108–111 each bind substrate; that span reads GADR. Asp110 serves as the catalytic Proton acceptor. K(+) is bound at residue Asp130. Thr133 is an ATP binding site. Thr186 serves as a coordination point for substrate.

The protein belongs to the type III pantothenate kinase family. Homodimer. NH4(+) serves as cofactor. It depends on K(+) as a cofactor.

It is found in the cytoplasm. It catalyses the reaction (R)-pantothenate + ATP = (R)-4'-phosphopantothenate + ADP + H(+). The protein operates within cofactor biosynthesis; coenzyme A biosynthesis; CoA from (R)-pantothenate: step 1/5. In terms of biological role, catalyzes the phosphorylation of pantothenate (Pan), the first step in CoA biosynthesis. This Desulforapulum autotrophicum (strain ATCC 43914 / DSM 3382 / VKM B-1955 / HRM2) (Desulfobacterium autotrophicum) protein is Type III pantothenate kinase.